Reading from the N-terminus, the 201-residue chain is Small ribosomal subunit protein uS4c (201 aa).

The interval 17–36 (ALPGLTRKTPKSGSNLKKKF) is disordered. The region spanning 89 to 157 (MRLDNILFRL…VQNYIASSDP (69 aa)) is the S4 RNA-binding domain.

The protein belongs to the universal ribosomal protein uS4 family. In terms of assembly, part of the 30S ribosomal subunit. Contacts protein S5. The interaction surface between S4 and S5 is involved in control of translational fidelity.

The protein localises to the plastid. It is found in the chloroplast. In terms of biological role, one of the primary rRNA binding proteins, it binds directly to 16S rRNA where it nucleates assembly of the body of the 30S subunit. With S5 and S12 plays an important role in translational accuracy. The chain is Small ribosomal subunit protein uS4c (rps4) from Agrostis stolonifera (Creeping bentgrass).